Consider the following 172-residue polypeptide: RNA silencing suppressor p19 (172 aa).

Disordered regions lie at residues 1-38 and 152-172; these read MEGA…ESPG and VEGN…KESE. 2 stretches are compositionally biased toward basic and acidic residues: residues 9-20 and 159-172; these read DAREQANSERWD and GRPE…KESE.

Belongs to the tombusvirus protein p19 family. Homodimer.

In terms of biological role, viral suppressor of RNA silencing which binds specifically to silencing RNAs (siRNAs). Acts as a molecular caliper to specifically select siRNAs based on the length of the duplex region of the RNA. The chain is RNA silencing suppressor p19 from Havel river virus (HaRV).